The primary structure comprises 553 residues: Glutamate--tRNA ligase (553 aa).

The short motif at 98-108 (PNPSGPLHIGH) is the 'HIGH' region element.

This sequence belongs to the class-I aminoacyl-tRNA synthetase family. Glutamate--tRNA ligase type 2 subfamily.

It is found in the cytoplasm. It catalyses the reaction tRNA(Glu) + L-glutamate + ATP = L-glutamyl-tRNA(Glu) + AMP + diphosphate. In terms of biological role, catalyzes the attachment of glutamate to tRNA(Glu) in a two-step reaction: glutamate is first activated by ATP to form Glu-AMP and then transferred to the acceptor end of tRNA(Glu). This Methanocaldococcus jannaschii (strain ATCC 43067 / DSM 2661 / JAL-1 / JCM 10045 / NBRC 100440) (Methanococcus jannaschii) protein is Glutamate--tRNA ligase.